The sequence spans 276 residues: NAD-capped RNA hydrolase NudC (276 aa).

R82 provides a ligand contact to substrate. The Zn(2+) site is built by C112 and C115. E125 serves as a coordination point for substrate. Residues C130 and C133 each coordinate Zn(2+). Y138 serves as a coordination point for substrate. One can recognise a Nudix hydrolase domain in the interval 139 to 262; the sequence is PRISPSMIVL…SIARYLIDLY (124 aa). A divalent metal cation-binding residues include A172, E188, and E192. The Nudix box motif lies at 173–194; it reads GFAEPGESAEDCLVREVREEVA. Substrate is bound at residue 206-213; that stretch reads QCWPFPHS. E233 serves as a coordination point for a divalent metal cation. A255 contacts substrate.

This sequence belongs to the Nudix hydrolase family. NudC subfamily. As to quaternary structure, homodimer. Mg(2+) serves as cofactor. The cofactor is Mn(2+). It depends on Zn(2+) as a cofactor.

The enzyme catalyses a 5'-end NAD(+)-phospho-ribonucleoside in mRNA + H2O = a 5'-end phospho-adenosine-phospho-ribonucleoside in mRNA + beta-nicotinamide D-ribonucleotide + 2 H(+). It carries out the reaction NAD(+) + H2O = beta-nicotinamide D-ribonucleotide + AMP + 2 H(+). It catalyses the reaction NADH + H2O = reduced beta-nicotinamide D-ribonucleotide + AMP + 2 H(+). Its function is as follows. mRNA decapping enzyme that specifically removes the nicotinamide adenine dinucleotide (NAD) cap from a subset of mRNAs by hydrolyzing the diphosphate linkage to produce nicotinamide mononucleotide (NMN) and 5' monophosphate mRNA. The NAD-cap is present at the 5'-end of some mRNAs and stabilizes RNA against 5'-processing. Has preference for mRNAs with a 5'-end purine. Catalyzes the hydrolysis of a broad range of dinucleotide pyrophosphates. This is NAD-capped RNA hydrolase NudC from Pseudomonas putida (strain ATCC 700007 / DSM 6899 / JCM 31910 / BCRC 17059 / LMG 24140 / F1).